Reading from the N-terminus, the 375-residue chain is uncharacterized protein (375 aa).

Over 1-2 (MR) the chain is Cytoplasmic. Residues 3–23 (WYSYVIPAVILSIIAISGVWW) traverse the membrane as a helical; Signal-anchor for type II membrane protein segment. Residues 24–375 (NATLGTRLDQ…YIEQRLFPQP (352 aa)) lie on the Lumenal side of the membrane.

It belongs to the glycosyltransferase 34 family.

Its subcellular location is the endoplasmic reticulum membrane. It localises to the golgi apparatus membrane. This is an uncharacterized protein from Schizosaccharomyces pombe (strain 972 / ATCC 24843) (Fission yeast).